Consider the following 159-residue polypeptide: 2-C-methyl-D-erythritol 2,4-cyclodiphosphate synthase (159 aa).

Residues D8 and H10 each contribute to the a divalent metal cation site. Residues 8–10 (DVH) and 34–35 (HS) each bind 4-CDP-2-C-methyl-D-erythritol 2-phosphate. H42 is a binding site for a divalent metal cation. 4-CDP-2-C-methyl-D-erythritol 2-phosphate is bound by residues 56-58 (DIG), 61-65 (FPDTD), 100-106 (AQAPKML), 132-135 (TTTE), F139, and R142.

The protein belongs to the IspF family. Homotrimer. A divalent metal cation is required as a cofactor.

It carries out the reaction 4-CDP-2-C-methyl-D-erythritol 2-phosphate = 2-C-methyl-D-erythritol 2,4-cyclic diphosphate + CMP. Its pathway is isoprenoid biosynthesis; isopentenyl diphosphate biosynthesis via DXP pathway; isopentenyl diphosphate from 1-deoxy-D-xylulose 5-phosphate: step 4/6. Its function is as follows. Involved in the biosynthesis of isopentenyl diphosphate (IPP) and dimethylallyl diphosphate (DMAPP), two major building blocks of isoprenoid compounds. Catalyzes the conversion of 4-diphosphocytidyl-2-C-methyl-D-erythritol 2-phosphate (CDP-ME2P) to 2-C-methyl-D-erythritol 2,4-cyclodiphosphate (ME-CPP) with a corresponding release of cytidine 5-monophosphate (CMP). The sequence is that of 2-C-methyl-D-erythritol 2,4-cyclodiphosphate synthase from Salmonella typhimurium (strain LT2 / SGSC1412 / ATCC 700720).